The sequence spans 264 residues: Proteasome subunit beta type-4 (264 aa).

Residue Met1 is modified to N-acetylmethionine. The propeptide occupies 1–45; it reads MEAFWESRAGHWAGGPAPGQFYRIPATPSGLMDPASAPCEGPITR. At Tyr102 the chain carries Phosphotyrosine.

This sequence belongs to the peptidase T1B family. The 26S proteasome consists of a 20S proteasome core and two 19S regulatory subunits. The 20S proteasome core is a barrel-shaped complex made of 28 subunits that are arranged in four stacked rings. The two outer rings are each formed by seven alpha subunits, and the two inner rings are formed by seven beta subunits. The proteolytic activity is exerted by three beta-subunits PSMB5, PSMB6 and PSMB7. Forms a ternary complex with SMAD1 and OAZ1 before PSMB4 is incorporated into the 20S proteasome. Interacts with PRPF19. In terms of tissue distribution, detected in liver (at protein level).

The protein localises to the cytoplasm. Its subcellular location is the nucleus. In terms of biological role, non-catalytic component of the 20S core proteasome complex involved in the proteolytic degradation of most intracellular proteins. This complex plays numerous essential roles within the cell by associating with different regulatory particles. Associated with two 19S regulatory particles, forms the 26S proteasome and thus participates in the ATP-dependent degradation of ubiquitinated proteins. The 26S proteasome plays a key role in the maintenance of protein homeostasis by removing misfolded or damaged proteins that could impair cellular functions, and by removing proteins whose functions are no longer required. Associated with the PA200 or PA28, the 20S proteasome mediates ubiquitin-independent protein degradation. This type of proteolysis is required in several pathways including spermatogenesis (20S-PA200 complex) or generation of a subset of MHC class I-presented antigenic peptides (20S-PA28 complex). SMAD1/OAZ1/PSMB4 complex mediates the degradation of the CREBBP/EP300 repressor SNIP1. This is Proteasome subunit beta type-4 (Psmb4) from Mus musculus (Mouse).